Consider the following 297-residue polypeptide: Cyclin-dependent kinase 2 (297 aa).

Positions 4–286 (FQKVEKIGEG…AKVALTHPFF (283 aa)) constitute a Protein kinase domain. Residues 10–18 (IGEGTYGVV), K33, 81–83 (EFL), and D86 each bind ATP. Position 14 is a phosphothreonine (T14). Y15 is modified (phosphotyrosine). Residue D127 is the Proton acceptor of the active site. ATP contacts are provided by residues 129 to 132 (KPQN) and D145. T160 carries the post-translational modification Phosphothreonine; by CAK.

It belongs to the protein kinase superfamily. CMGC Ser/Thr protein kinase family. CDC2/CDKX subfamily. In terms of assembly, interacts with spdya.

The catalysed reaction is L-seryl-[protein] + ATP = O-phospho-L-seryl-[protein] + ADP + H(+). The enzyme catalyses L-threonyl-[protein] + ATP = O-phospho-L-threonyl-[protein] + ADP + H(+). With respect to regulation, phosphorylation at Thr-14 or Tyr-15 inactivates the enzyme, while phosphorylation at Thr-160 activates it. Activated by spdya. Functionally, serine/threonine-protein kinase involved in the control of the cell cycle; essential for meiosis, but dispensable for mitosis. Triggers duplication of centrosomes and DNA. Acts at the G1-S transition to promote the E2F transcriptional program and the initiation of DNA synthesis, and modulates G2 progression; controls the timing of entry into mitosis/meiosis by controlling the subsequent activation of cyclin B/CDK1 by phosphorylation, and coordinates the activation of cyclin B/CDK1 at the centrosome and in the nucleus. Crucial role in orchestrating a fine balance between cellular proliferation, cell death, and DNA repair in embryonic stem cells (ESCs). Activity of CDK2 is maximal during S phase and G2; activated by interaction with cyclin E during the early stages of DNA synthesis to permit G1-S transition, and subsequently activated by cyclin A2 (cyclin A1 in germ cells) during the late stages of DNA replication to drive the transition from S phase to mitosis, the G2 phase. This Xenopus laevis (African clawed frog) protein is Cyclin-dependent kinase 2 (cdk2).